A 264-amino-acid polypeptide reads, in one-letter code: S-adenosylmethionine decarboxylase proenzyme (264 aa).

Ser112 (schiff-base intermediate with substrate; via pyruvic acid) is an active-site residue. Ser112 carries the pyruvic acid (Ser); by autocatalysis modification. The Proton acceptor; for processing activity role is filled by His117. The active-site Proton donor; for catalytic activity is Cys140.

It belongs to the prokaryotic AdoMetDC family. Type 2 subfamily. In terms of assembly, heterooctamer of four alpha and four beta chains arranged as a tetramer of alpha/beta heterodimers. Pyruvate serves as cofactor. Post-translationally, is synthesized initially as an inactive proenzyme. Formation of the active enzyme involves a self-maturation process in which the active site pyruvoyl group is generated from an internal serine residue via an autocatalytic post-translational modification. Two non-identical subunits are generated from the proenzyme in this reaction, and the pyruvate is formed at the N-terminus of the alpha chain, which is derived from the carboxyl end of the proenzyme. The post-translation cleavage follows an unusual pathway, termed non-hydrolytic serinolysis, in which the side chain hydroxyl group of the serine supplies its oxygen atom to form the C-terminus of the beta chain, while the remainder of the serine residue undergoes an oxidative deamination to produce ammonia and the pyruvoyl group blocking the N-terminus of the alpha chain.

The catalysed reaction is S-adenosyl-L-methionine + H(+) = S-adenosyl 3-(methylsulfanyl)propylamine + CO2. Its pathway is amine and polyamine biosynthesis; S-adenosylmethioninamine biosynthesis; S-adenosylmethioninamine from S-adenosyl-L-methionine: step 1/1. Functionally, catalyzes the decarboxylation of S-adenosylmethionine to S-adenosylmethioninamine (dcAdoMet), the propylamine donor required for the synthesis of the polyamines spermine and spermidine from the diamine putrescine. This is S-adenosylmethionine decarboxylase proenzyme from Serratia proteamaculans (strain 568).